The sequence spans 243 residues: UDP-2,3-diacylglucosamine hydrolase (243 aa).

Mn(2+)-binding residues include D8, H10, D41, N79, and H114. N79–R80 contacts substrate. Substrate-binding residues include D122, K164, K167, and H195. 2 residues coordinate Mn(2+): H195 and H197.

This sequence belongs to the LpxH family. Requires Mn(2+) as cofactor.

Its subcellular location is the cell inner membrane. The catalysed reaction is UDP-2-N,3-O-bis[(3R)-3-hydroxytetradecanoyl]-alpha-D-glucosamine + H2O = 2-N,3-O-bis[(3R)-3-hydroxytetradecanoyl]-alpha-D-glucosaminyl 1-phosphate + UMP + 2 H(+). It functions in the pathway glycolipid biosynthesis; lipid IV(A) biosynthesis; lipid IV(A) from (3R)-3-hydroxytetradecanoyl-[acyl-carrier-protein] and UDP-N-acetyl-alpha-D-glucosamine: step 4/6. Its function is as follows. Hydrolyzes the pyrophosphate bond of UDP-2,3-diacylglucosamine to yield 2,3-diacylglucosamine 1-phosphate (lipid X) and UMP by catalyzing the attack of water at the alpha-P atom. Involved in the biosynthesis of lipid A, a phosphorylated glycolipid that anchors the lipopolysaccharide to the outer membrane of the cell. The sequence is that of UDP-2,3-diacylglucosamine hydrolase from Vibrio vulnificus (strain CMCP6).